Consider the following 421-residue polypeptide: Histidine--tRNA ligase (421 aa).

Belongs to the class-II aminoacyl-tRNA synthetase family. As to quaternary structure, homodimer.

It is found in the cytoplasm. It carries out the reaction tRNA(His) + L-histidine + ATP = L-histidyl-tRNA(His) + AMP + diphosphate + H(+). This Ureaplasma urealyticum serovar 10 (strain ATCC 33699 / Western) protein is Histidine--tRNA ligase.